Reading from the N-terminus, the 114-residue chain is Iron-sulfur cluster insertion protein ErpA (114 aa).

Iron-sulfur cluster is bound by residues cysteine 42, cysteine 106, and cysteine 108.

It belongs to the HesB/IscA family. Homodimer. Iron-sulfur cluster serves as cofactor.

Functionally, required for insertion of 4Fe-4S clusters for at least IspG. The chain is Iron-sulfur cluster insertion protein ErpA from Yersinia enterocolitica serotype O:8 / biotype 1B (strain NCTC 13174 / 8081).